The chain runs to 154 residues: MAARLCCQLDPSRDVLCLRPVGAESRGRPLSGPLGTLSSPSPSAVPADHGAHLSLRGLPVCAFSSAGPCALRFTSARCMETTVNAHQSLPKVLHKRTLGLPAMSTTDLEAYFKDCVFKDWEELGEEIRLMIFVLGGCRHKLVCAPAPCNFFTSA.

Residues 68–117 (PCALRFTSARCMETTVNAHQSLPKVLHKRTLGLPAMSTTDLEAYFKDCVF) form a mitochondrial targeting sequence region.

This sequence belongs to the orthohepadnavirus protein X family. May form homodimer. May interact with host CEBPA, CFLAR, CREB1, DDB1, E4F1, HBXIP, HSPD1/HSP60, NFKBIA, POLR2E and SMAD4. Interacts with host SMC5-SMC6 complex and induces its degradation. Interacts with host TRPC4AP; leading to prevent ubiquitination of TRPC4AP. Interacts with host PLSCR1; this interaction promotes ubiquitination and degradation of HBx and impairs HBx-mediated cell proliferation. In terms of processing, a fraction may be phosphorylated in insect cells and HepG2 cells, a human hepatoblastoma cell line. Phosphorylated in vitro by host protein kinase C or mitogen-activated protein kinase. N-acetylated in insect cells.

It localises to the host cytoplasm. It is found in the host nucleus. The protein localises to the host mitochondrion. Functionally, multifunctional protein that plays a role in silencing host antiviral defenses and promoting viral transcription. Does not seem to be essential for HBV infection. May be directly involved in development of cirrhosis and liver cancer (hepatocellular carcinoma). Most of cytosolic activities involve modulation of cytosolic calcium. The effect on apoptosis is controversial depending on the cell types in which the studies have been conducted. May induce apoptosis by localizing in mitochondria and causing loss of mitochondrial membrane potential. May also modulate apoptosis by binding host CFLAR, a key regulator of the death-inducing signaling complex (DISC). Promotes viral transcription by using the host E3 ubiquitin ligase DDB1 to target the SMC5-SMC6 complex to proteasomal degradation. This host complex would otherwise bind to viral episomal DNA, and prevents its transcription. Moderately stimulates transcription of many different viral and cellular transcription elements. Promoters and enhancers stimulated by HBx contain DNA binding sites for NF-kappa-B, AP-1, AP-2, c-EBP, ATF/CREB, or the calcium-activated factor NF-AT. This is Protein X from Homo sapiens (Human).